The following is a 120-amino-acid chain: MKKIVCAVVALLLTLPAWANVNAHEEARINAMLNALAQKKDLTFVRNGDAHNCEEAVSHLRLKLGNTRNRIDTAEQFIDKVASSSSITGKPYIVKIPGKSDENAQPYLHALIAETDKNVE.

A signal peptide spans 1-19; sequence MKKIVCAVVALLLTLPAWA.

This is an uncharacterized protein from Salmonella typhimurium (strain LT2 / SGSC1412 / ATCC 700720).